Reading from the N-terminus, the 413-residue chain is Phosphopentomutase (413 aa).

D11, D306, H311, D347, H348, and H359 together coordinate Mn(2+).

The protein belongs to the phosphopentomutase family. The cofactor is Mn(2+).

The protein localises to the cytoplasm. It catalyses the reaction 2-deoxy-alpha-D-ribose 1-phosphate = 2-deoxy-D-ribose 5-phosphate. The catalysed reaction is alpha-D-ribose 1-phosphate = D-ribose 5-phosphate. It participates in carbohydrate degradation; 2-deoxy-D-ribose 1-phosphate degradation; D-glyceraldehyde 3-phosphate and acetaldehyde from 2-deoxy-alpha-D-ribose 1-phosphate: step 1/2. Functionally, isomerase that catalyzes the conversion of deoxy-ribose 1-phosphate (dRib-1-P) and ribose 1-phosphate (Rib-1-P) to deoxy-ribose 5-phosphate (dRib-5-P) and ribose 5-phosphate (Rib-5-P), respectively. The protein is Phosphopentomutase of Helicobacter pylori (strain P12).